A 1159-amino-acid polypeptide reads, in one-letter code: Ferroxidase HEPHL1 (1159 aa).

Positions 1-23 (MFLKQPGGCILLQFLGLLGLVGA) are cleaved as a signal peptide. 6 Plastocyanin-like domains span residues 24 to 206 (VTRT…LLVC), 217 to 365 (MRTD…VGNC), 378 to 560 (QRRY…LLVC), 570 to 718 (TQKG…ISSC), 730 to 906 (MLRT…LITC), and 914 to 1092 (KGRR…VPSQ). Over 24–1114 (VTRTYYIGIV…KNLRPRGAKA (1091 aa)) the chain is Extracellular. Cu cation-binding residues include histidine 126 and histidine 128. Asparagine 160 carries N-linked (GlcNAc...) asparagine glycosylation. An intrachain disulfide couples cysteine 180 to cysteine 206. Histidine 186 and histidine 188 together coordinate Cu cation. Asparagine 235 carries N-linked (GlcNAc...) asparagine glycosylation. Residues cysteine 284 and cysteine 365 are joined by a disulfide bond. Residues histidine 303, cysteine 346, and histidine 351 each coordinate Cu cation. Asparagine 406 carries an N-linked (GlcNAc...) asparagine glycan. Cysteine 534 and cysteine 560 are joined by a disulfide. Asparagine 588 carries an N-linked (GlcNAc...) asparagine glycan. Cysteine 637 and cysteine 718 are disulfide-bonded. Histidine 656, cysteine 699, histidine 704, and methionine 709 together coordinate Cu cation. Residue asparagine 771 is glycosylated (N-linked (GlcNAc...) asparagine). Cysteine 880 and cysteine 906 form a disulfide bridge. An N-linked (GlcNAc...) asparagine glycan is attached at asparagine 934. The Cu cation site is built by histidine 1002, histidine 1005, histidine 1007, histidine 1047, cysteine 1048, histidine 1049, histidine 1053, and methionine 1058. The helical transmembrane segment at 1115-1135 (ALVILFILGLLLLVATVVLAL) threads the bilayer. The Cytoplasmic portion of the chain corresponds to 1136-1159 (RLRSSRRQMAYREVQSCALPTDAL).

This sequence belongs to the multicopper oxidase family. It depends on Cu cation as a cofactor.

It localises to the membrane. The enzyme catalyses 4 Fe(2+) + O2 + 4 H(+) = 4 Fe(3+) + 2 H2O. Functionally, is a copper-binding glycoprotein with ferroxidase activity. It oxidizes Fe(2+) to Fe(3+) without releasing radical oxygen species. May be involved in the regulation of intracellular iron content. The sequence is that of Ferroxidase HEPHL1 (Hephl1) from Mus musculus (Mouse).